Reading from the N-terminus, the 346-residue chain is Serine/threonine-protein phosphatase PP1(4.8) (346 aa).

The segment at 46 to 65 (QSAQTQESTPKTNGTGRATT) is disordered. Mn(2+) is bound by residues aspartate 102, histidine 104, aspartate 130, and asparagine 162. Histidine 163 functions as the Proton donor in the catalytic mechanism. Residues histidine 211 and histidine 287 each coordinate Mn(2+).

This sequence belongs to the PPP phosphatase family. PP-1 subfamily. Mn(2+) is required as a cofactor.

The catalysed reaction is O-phospho-L-seryl-[protein] + H2O = L-seryl-[protein] + phosphate. The enzyme catalyses O-phospho-L-threonyl-[protein] + H2O = L-threonyl-[protein] + phosphate. This is Serine/threonine-protein phosphatase PP1(4.8) from Trypanosoma brucei brucei.